The primary structure comprises 205 residues: Small ribosomal subunit protein uS4 (205 aa).

The span at 1–16 shows a compositional bias: basic and acidic residues; it reads MSKRESSKYKIDRRMG. The tract at residues 1–46 is disordered; sequence MSKRESSKYKIDRRMGENIWGRPKSPVNRREYGPGQHGQRRKGKLS. Positions 94–157 constitute an S4 RNA-binding domain; the sequence is SRLDAIVYRA…KQLVIVLEAV (64 aa).

This sequence belongs to the universal ribosomal protein uS4 family. Part of the 30S ribosomal subunit. Contacts protein S5. The interaction surface between S4 and S5 is involved in control of translational fidelity.

Functionally, one of the primary rRNA binding proteins, it binds directly to 16S rRNA where it nucleates assembly of the body of the 30S subunit. With S5 and S12 plays an important role in translational accuracy. The chain is Small ribosomal subunit protein uS4 from Rhizobium johnstonii (strain DSM 114642 / LMG 32736 / 3841) (Rhizobium leguminosarum bv. viciae).